A 70-amino-acid chain; its full sequence is DNA-directed RNA polymerase subunit omega (70 aa).

It belongs to the RNA polymerase subunit omega family. The RNAP catalytic core consists of 2 alpha, 1 beta, 1 beta' and 1 omega subunit. When a sigma factor is associated with the core the holoenzyme is formed, which can initiate transcription.

The enzyme catalyses RNA(n) + a ribonucleoside 5'-triphosphate = RNA(n+1) + diphosphate. Promotes RNA polymerase assembly. Latches the N- and C-terminal regions of the beta' subunit thereby facilitating its interaction with the beta and alpha subunits. This Nitratiruptor sp. (strain SB155-2) protein is DNA-directed RNA polymerase subunit omega.